The sequence spans 137 residues: Large ribosomal subunit protein uL16 (137 aa).

Positions 1 to 17 (MLQPKRTKFRKQQKGRN) are enriched in basic residues. A disordered region spans residues 1–21 (MLQPKRTKFRKQQKGRNRGQA).

The protein belongs to the universal ribosomal protein uL16 family. In terms of assembly, part of the 50S ribosomal subunit.

In terms of biological role, binds 23S rRNA and is also seen to make contacts with the A and possibly P site tRNAs. The polypeptide is Large ribosomal subunit protein uL16 (Nitrosococcus oceani (strain ATCC 19707 / BCRC 17464 / JCM 30415 / NCIMB 11848 / C-107)).